We begin with the raw amino-acid sequence, 221 residues long: Extracellular superoxide dismutase [Cu-Zn] (221 aa).

The N-terminal stretch at 1–19 is a signal peptide; the sequence is MKTRVVLILALSVCIEAAS. N56 is a glycosylation site (N-linked (GlcNAc...) asparagine). Cu cation contacts are provided by H70, H72, and H87. C81 and C170 form a disulfide bridge. 4 residues coordinate Zn(2+): H87, H95, H104, and D107. A Cu cation-binding site is contributed by H144.

It belongs to the Cu-Zn superoxide dismutase family. Cu cation serves as cofactor. Zn(2+) is required as a cofactor. Isoform 2 is preferentially expressed in eggs.

The protein localises to the secreted. It is found in the extracellular space. The protein resides in the membrane. It catalyses the reaction 2 superoxide + 2 H(+) = H2O2 + O2. Functionally, protects cells against oxidative stress by converting superoxide radicals to hydrogen peroxide. Oxidative stress is involved in various biological dysfunctions and senescence. The sequence is that of Extracellular superoxide dismutase [Cu-Zn] (sod-4) from Caenorhabditis elegans.